A 317-amino-acid polypeptide reads, in one-letter code: tRNA pseudouridine synthase B (317 aa).

Residue aspartate 47 is the Nucleophile of the active site.

The protein belongs to the pseudouridine synthase TruB family. Type 1 subfamily.

The enzyme catalyses uridine(55) in tRNA = pseudouridine(55) in tRNA. In terms of biological role, responsible for synthesis of pseudouridine from uracil-55 in the psi GC loop of transfer RNAs. In Shewanella sp. (strain ANA-3), this protein is tRNA pseudouridine synthase B.